The chain runs to 123 residues: uncharacterized protein (123 aa).

Positions 100 to 123 (NKQPKTTHHFSTNSSEYKSRKSKH) are disordered.

This is an uncharacterized protein from Acanthamoeba polyphaga mimivirus (APMV).